A 775-amino-acid chain; its full sequence is MDCRTKANPDRTFDLVLKVKCHASENEDPVVLWKFPEDFGDQEILQSVPKFCFPFDVERVSQNQVGQHFTFVLTDIESKQRFGFCRLTSGGTICLCILSYLPWFEVYYKLLNTLADYLAKELENDLNETLRSLYNHPVPKANTPVNLSVNQEIFIACEQVLKDQPALVPHSYFIAPDVTGLPTIPESRNLTEYFVAVDVNNMLQLYASMLHERRIVIISSKLSTLTACIHGSAALLYPMYWQHIYIPVLPPHLLDYCCAPMPYLIGIHSSLIERVKNKSLEDVVMLNVDTNTLESPFSDLNNLPSDVVSALKNKLKKQSTATGDGVARAFLRAQAALFGSYRDALRYKPGEPITFCEESFVKHRSSVMKQFLETAINLQLFKQFIDGRLAKLNAGRGFSDVFEEEITSGGFCGGNPRSYQQWVHTVKKGGALFNTAMTKATPAVRTAYKFAKNHAKLGLKEVKSKLKHKENEEDYGTCSSSVQYTPVYKLHNEKGGNSEKRKLAQARLKRPLKSLDGALYDDEDDDDIERASKLSSEDGEEASAYLYESDDSVETRVKTPYSGEMDLLGEILDTLSTHSSDQGKLAAAKSLDFFRSMDDIDYKPTNKSNAPSENNLAFLCGGSGDQAEWNLGQDDSALHGKHLPPSPRKRVSSSGLTDSLFILKEENSNKHLGADNVSDPTSGLDFQLTSPEVSQTDKGKTEKRETLSQISDDLLIPGLGRHSSTFVPWEKEGKEAKETSEDIGLLHEVVSLCHMTSDFQQSLNISDKNTNGNQT.

Residues 14–143 (DLVLKVKCHA…YNHPVPKANT (130 aa)) form the uDENN domain. Residues 180–316 (GLPTIPESRN…VVSALKNKLK (137 aa)) enclose the cDENN domain. The region spanning 318–395 (QSTATGDGVA…DGRLAKLNAG (78 aa)) is the dDENN domain. The FXDXF motif motif lies at 398–402 (FSDVF). At Y520 the chain carries Phosphotyrosine. Residues S535, S536, S549, and S552 each carry the phosphoserine modification. Residues 566–575 (DLLGEILDTL) carry the Clathrin box motif. Disordered regions lie at residues 635-654 (DSAL…VSSS) and 671-706 (HLGA…KRET). Basic residues predominate over residues 639-651 (HGKHLPPSPRKRV). 2 positions are modified to phosphoserine: S652 and S653. Basic and acidic residues predominate over residues 695-706 (QTDKGKTEKRET).

As to quaternary structure, interacts with RAB35. Interacts with clathrin heavy chain/CLTC. Interacts with components of the adapter protein complex 2 (AP-2) AP2A2 and AP2B1. Interacts with CD3E. In terms of processing, phosphorylated on serine and/or threonine, possibly regulating the guanine nucleotide exchange factor (GEF) activity. In terms of tissue distribution, highly expressed in dendritic and natural killer cells and at lower levels in other myeloid lineage cells and in pituitary. Significantly up-regulated in effector memory T-cells as compared with naive T-cells.

Its subcellular location is the cytoplasm. It is found in the cytosol. The protein localises to the cytoplasmic vesicle. The protein resides in the clathrin-coated vesicle. Functionally, guanine nucleotide exchange factor (GEF) for RAB35 that acts as a regulator of T-cell receptor (TCR) internalization in TH2 cells. Acts by promoting the exchange of GDP to GTP, converting inactive GDP-bound RAB35 into its active GTP-bound form. Plays a role in clathrin-mediated endocytosis. Controls cytokine production in TH2 lymphocytes by controlling the rate of TCR internalization and routing to endosomes: acts by mediating clathrin-mediated endocytosis of TCR via its interaction with the adapter protein complex 2 (AP-2) and GEF activity. Dysregulation leads to impaired TCR down-modulation and recycling, affecting cytokine production in TH2 cells. This chain is DENN domain-containing protein 1B, found in Homo sapiens (Human).